Here is a 608-residue protein sequence, read N- to C-terminus: X-ray repair cross-complementing protein 6 (608 aa).

The segment covering 1-11 (MSEWESYYKTE) has biased composition (basic and acidic residues). The disordered stretch occupies residues 1–29 (MSEWESYYKTEGEEEEEEEESPDTGGEYK). Ser2 is subject to N-acetylserine. The residue at position 2 (Ser2) is a Phosphoserine. A Phosphoserine; by PRKDC modification is found at Ser6. Residues 12-22 (GEEEEEEEESP) are compositionally biased toward acidic residues. Lys29 serves as the catalytic Schiff-base intermediate with DNA; for 5'-deoxyribose-5-phosphate lyase activity. Lys29 carries the post-translational modification N6-acetyllysine. At Ser49 the chain carries Phosphoserine; by PRKDC. The region spanning 259–466 (FKLGEDVVLM…IDKMKAIVQK (208 aa)) is the Ku domain. A DNA-binding region spans residues 275 to 339 (VQKANKPFPV…EETEELKRFD (65 aa)). Residue Lys315 forms a Glycyl lysine isopeptide (Lys-Gly) (interchain with G-Cter in SUMO2) linkage. Residues Lys329, Lys336, and Lys459 each carry the N6-acetyllysine modification. Residues 371–480 (SLVSGSSTLF…YRSDSFENPV (110 aa)) form an interaction with XRCC5 region. Phosphoserine is present on residues Ser475, Ser518, and Ser548. A disordered region spans residues 534-557 (PEGKVAKRKQDDEGSTSKKPKVEL). Positions 537-557 (KVAKRKQDDEGSTSKKPKVEL) are enriched in basic and acidic residues. An interaction with DEAF1 region spans residues 548-607 (STSKKPKVELSEEELKAHFRKGTLGKLTVPTLKDICKAHGLKSGPKKQELLDALIRHLEK). Lys554 is covalently cross-linked (Glycyl lysine isopeptide (Lys-Gly) (interchain with G-Cter in SUMO2)). At Ser558 the chain carries Phosphoserine. Lys568 carries the N6,N6,N6-trimethyllysine modification. The SAP domain maps to 571–605 (LGKLTVPTLKDICKAHGLKSGPKKQELLDALIRHL). The segment at 576–581 (VPTLKD) is interaction with BAX.

Belongs to the ku70 family. Heterodimer composed of XRCC5/Ku80 and XRCC6/Ku70. Component of the core long-range non-homologous end joining (NHEJ) complex (also named DNA-PK complex) composed of PRKDC, LIG4, XRCC4, XRCC6/Ku70, XRCC5/Ku86 and NHEJ1/XLF. Additional component of the NHEJ complex includes PAXX. Following autophosphorylation, PRKDC dissociates from DNA, leading to formation of the short-range NHEJ complex, composed of LIG4, XRCC4, XRCC6/Ku70, XRCC5/Ku86 and NHEJ1/XLF. The XRCC5-XRCC6 dimer also associates with NAA15, and this complex binds to the osteocalcin promoter and activates osteocalcin expression. In addition, XRCC6 interacts with the osteoblast-specific transcription factors MSX2, RUNX2 and DLX5. Interacts with ELF3. Interacts with ATP23. The XRCC5-XRRC6 dimer associates in a DNA-dependent manner with APEX1. Binds to CDK9. Identified in a complex with DEAF1 and XRCC5. Interacts with DEAF1 (via the SAND domain); the interaction is direct and may be inhibited by DNA-binding. Interacts with CLU. Interacts with NR4A3; the DNA-dependent protein kinase complex DNA-PK phosphorylates and activates NR4A3 and prevents NR4A3 ubiquitinylation and degradation. Interacts with CYREN (via KBM motif). Interacts (via N-terminus) with HSF1 (via N-terminus); this interaction is direct and prevents XRCC5/XRCC6 heterodimeric binding and non-homologous end joining (NHEJ) repair activities induced by ionizing radiation (IR). Part of the HDP-RNP complex composed of at least HEXIM1, PRKDC, XRCC5, XRCC6, paraspeckle proteins (SFPQ, NONO, PSPC1, RBM14, and MATR3) and NEAT1 RNA. Interacts with HMBOX1. Interacts with ATF7. Interacts with APLF (via KBM motif). Interacts with WRN (via KBM motif). The XRCC5-XRCC6 dimer associates with ALKBH2. Interacts with TPRN; TPRN interacts with a number of DNA damage response proteins, is recruited to sites of DNA damage and may play a role in DNA damage repair. When not acetylated, interacts with BAX. Interacts with ERCC6L2. Post-translationally, phosphorylation by PRKDC may enhance helicase activity. Phosphorylation of Ser-49 does not affect DNA repair. In terms of processing, ADP-ribosylated by PARP3. Methylation by SETD4 leads to accumulation in the cytoplasm and is a prerequisite for acetylation, possibly due to the change of subcellular from the nucleus to the cytosol initiated by methylation, acetylation occurring in the cytosol. Post-translationally, acetylation can be catalyzed in vitro by CREBBP/CBP and KAT2B/PCAF.

The protein localises to the nucleus. Its subcellular location is the chromosome. It is found in the cytoplasm. In terms of biological role, single-stranded DNA-dependent ATP-dependent helicase that plays a key role in DNA non-homologous end joining (NHEJ) by recruiting DNA-PK to DNA. Required for double-strand break repair and V(D)J recombination. Also has a role in chromosome translocation. Has a role in chromosome translocation. The DNA helicase II complex binds preferentially to fork-like ends of double-stranded DNA in a cell cycle-dependent manner. It works in the 3'-5' direction. During NHEJ, the XRCC5-XRRC6 dimer performs the recognition step: it recognizes and binds to the broken ends of the DNA and protects them from further resection. Binding to DNA may be mediated by XRCC6. The XRCC5-XRRC6 dimer acts as a regulatory subunit of the DNA-dependent protein kinase complex DNA-PK by increasing the affinity of the catalytic subunit PRKDC to DNA by 100-fold. The XRCC5-XRRC6 dimer is probably involved in stabilizing broken DNA ends and bringing them together. The assembly of the DNA-PK complex to DNA ends is required for the NHEJ ligation step. Probably also acts as a 5'-deoxyribose-5-phosphate lyase (5'-dRP lyase), by catalyzing the beta-elimination of the 5' deoxyribose-5-phosphate at an abasic site near double-strand breaks. 5'-dRP lyase activity allows to 'clean' the termini of abasic sites, a class of nucleotide damage commonly associated with strand breaks, before such broken ends can be joined. The XRCC5-XRRC6 dimer together with APEX1 acts as a negative regulator of transcription. In association with NAA15, the XRCC5-XRRC6 dimer binds to the osteocalcin promoter and activates osteocalcin expression. Plays a role in the regulation of DNA virus-mediated innate immune response by assembling into the HDP-RNP complex, a complex that serves as a platform for IRF3 phosphorylation and subsequent innate immune response activation through the cGAS-STING pathway. Negatively regulates apoptosis by interacting with BAX and sequestering it from the mitochondria. Might have deubiquitination activity, acting on BAX. In Mus musculus (Mouse), this protein is X-ray repair cross-complementing protein 6 (Xrcc6).